The chain runs to 383 residues: Mannitol-1-phosphate 5-dehydrogenase (383 aa).

3 to 14 (ALHFGAGNIGRG) provides a ligand contact to NAD(+).

This sequence belongs to the mannitol dehydrogenase family.

It carries out the reaction D-mannitol 1-phosphate + NAD(+) = beta-D-fructose 6-phosphate + NADH + H(+). The polypeptide is Mannitol-1-phosphate 5-dehydrogenase (Serratia proteamaculans (strain 568)).